A 131-amino-acid chain; its full sequence is Small ribosomal subunit protein eS17 (131 aa).

The protein belongs to the eukaryotic ribosomal protein eS17 family.

This Drosophila melanogaster (Fruit fly) protein is Small ribosomal subunit protein eS17 (RpS17).